The primary structure comprises 518 residues: UDP-N-acetylmuramate--L-alanine ligase (518 aa).

158–164 (GTHGKTT) provides a ligand contact to ATP.

This sequence belongs to the MurCDEF family.

It localises to the cytoplasm. The enzyme catalyses UDP-N-acetyl-alpha-D-muramate + L-alanine + ATP = UDP-N-acetyl-alpha-D-muramoyl-L-alanine + ADP + phosphate + H(+). The protein operates within cell wall biogenesis; peptidoglycan biosynthesis. Cell wall formation. This is UDP-N-acetylmuramate--L-alanine ligase from Crocosphaera subtropica (strain ATCC 51142 / BH68) (Cyanothece sp. (strain ATCC 51142)).